Here is a 399-residue protein sequence, read N- to C-terminus: Coenzyme A biosynthesis bifunctional protein CoaBC (399 aa).

The interval 1-190 (MQSLAGKKIL…FAPKILVGKR (190 aa)) is phosphopantothenoylcysteine decarboxylase. Residue Cys159 is the Proton donor of the active site. The tract at residues 191–399 (VLITAGPTRE…AVMHLIHEQM (209 aa)) is phosphopantothenate--cysteine ligase. Residues Asp279, Lys289, 307-310 (PDIV), Phe326, Lys340, and Lys344 each bind CTP.

This sequence in the N-terminal section; belongs to the HFCD (homo-oligomeric flavin containing Cys decarboxylase) superfamily. In the C-terminal section; belongs to the PPC synthetase family. Mg(2+) serves as cofactor. The cofactor is FMN.

The enzyme catalyses N-[(R)-4-phosphopantothenoyl]-L-cysteine + H(+) = (R)-4'-phosphopantetheine + CO2. It catalyses the reaction (R)-4'-phosphopantothenate + L-cysteine + CTP = N-[(R)-4-phosphopantothenoyl]-L-cysteine + CMP + diphosphate + H(+). Its pathway is cofactor biosynthesis; coenzyme A biosynthesis; CoA from (R)-pantothenate: step 2/5. It functions in the pathway cofactor biosynthesis; coenzyme A biosynthesis; CoA from (R)-pantothenate: step 3/5. Catalyzes two sequential steps in the biosynthesis of coenzyme A. In the first step cysteine is conjugated to 4'-phosphopantothenate to form 4-phosphopantothenoylcysteine. In the second step the latter compound is decarboxylated to form 4'-phosphopantotheine. The chain is Coenzyme A biosynthesis bifunctional protein CoaBC from Vibrio cholerae serotype O1 (strain ATCC 39315 / El Tor Inaba N16961).